The sequence spans 440 residues: Amino acid transporter AVT6D (440 aa).

The next 11 membrane-spanning stretches (helical) occupy residues 26-46, 47-67, 102-122, 149-169, 182-202, 219-239, 262-282, 309-329, 356-376, 377-397, and 410-430; these read FAGA…MAIP, AAFK…IAWL, AVTV…SIII, WNTR…PLVL, ISFL…IIAL, GGLS…AFTF, ISVI…YLLF, IVRL…NFSL, FPLL…WYFF, QFLG…AIVL, and IVAS…ISTN.

This sequence belongs to the amino acid/polyamine transporter 2 family. Amino acid/auxin permease (AAAP) (TC 2.A.18.6) subfamily.

It localises to the membrane. The chain is Amino acid transporter AVT6D from Arabidopsis thaliana (Mouse-ear cress).